A 465-amino-acid polypeptide reads, in one-letter code: Ribulose bisphosphate carboxylase large chain (465 aa).

N6,N6,N6-trimethyllysine is present on K4. 2 residues coordinate substrate: N113 and T163. The active-site Proton acceptor is the K165. Substrate is bound at residue K167. Mg(2+) is bound by residues K191, D193, and E194. The residue at position 191 (K191) is an N6-carboxylysine. Catalysis depends on H284, which acts as the Proton acceptor. R285, H317, and S369 together coordinate substrate.

It belongs to the RuBisCO large chain family. Type I subfamily. Heterohexadecamer of 8 large chains and 8 small chains; disulfide-linked. The disulfide link is formed within the large subunit homodimers. The cofactor is Mg(2+). The disulfide bond which can form in the large chain dimeric partners within the hexadecamer appears to be associated with oxidative stress and protein turnover.

It localises to the plastid. The protein resides in the chloroplast. The catalysed reaction is 2 (2R)-3-phosphoglycerate + 2 H(+) = D-ribulose 1,5-bisphosphate + CO2 + H2O. It carries out the reaction D-ribulose 1,5-bisphosphate + O2 = 2-phosphoglycolate + (2R)-3-phosphoglycerate + 2 H(+). Its function is as follows. RuBisCO catalyzes two reactions: the carboxylation of D-ribulose 1,5-bisphosphate, the primary event in carbon dioxide fixation, as well as the oxidative fragmentation of the pentose substrate in the photorespiration process. Both reactions occur simultaneously and in competition at the same active site. The protein is Ribulose bisphosphate carboxylase large chain of Securidaca diversifolia (Easter flower).